Consider the following 364-residue polypeptide: Growth hormone secretagogue receptor type 1 (364 aa).

The Extracellular segment spans residues 1 to 40 (MWNATPSEEPEPNVTLDLDWDASPGNDSLSDELLPLFPAP). N-linked (GlcNAc...) asparagine glycosylation is found at asparagine 13 and asparagine 26. A helical membrane pass occupies residues 41–66 (LLAGVTATCVALFVVGISGNLLTMLV). The Cytoplasmic portion of the chain corresponds to 67–72 (VSRFRE). Residues 73-96 (LRTTTNLYLSSMAFSDLLIFLCMP) traverse the membrane as a helical segment. Residues 97 to 117 (LDLVRLWQYRPWNFGDLLCKL) lie on the Extracellular side of the membrane. Cysteine 115 and cysteine 197 are disulfide-bonded. The chain crosses the membrane as a helical span at residues 118–139 (FQFVSESCTYATVLTITALSVE). Residues 140–162 (RYFAICFPLRAKVVVTKGRVKLV) are Cytoplasmic-facing. The chain crosses the membrane as a helical span at residues 163–183 (ILVIWAVAFCSAGPIFVLVGV). Topologically, residues 184-211 (EHENGTDPRDTNECRATEFAVRSGLLTV) are extracellular. N-linked (GlcNAc...) asparagine glycosylation is present at asparagine 187. A helical transmembrane segment spans residues 212-235 (MVWVSSVFFFLPVFCLTVLYSLIG). Over 236–263 (RKLWRRRGDAAVGSSLRDQNHKQTVKML) the chain is Cytoplasmic. Residues 264–285 (AVVVFAFILCWLPFHVGRYLFS) form a helical membrane-spanning segment. Over 286-302 (KSFEPGSLEIAQISQYC) the chain is Extracellular. Residues 303–326 (NLVSFVLFYLSAAINPILYNIMSK) form a helical membrane-spanning segment. Topologically, residues 327–364 (KYRVAVFKLLGFESFSQRKLSTLKDESSRAWTKSSINT) are cytoplasmic.

It belongs to the G-protein coupled receptor 1 family.

Its subcellular location is the cell membrane. In terms of biological role, receptor for ghrelin, coupled to G-alpha-11 proteins. Stimulates growth hormone secretion. Also binds other growth hormone releasing peptides (GHRP) (e.g. Met-enkephalin and GHRP-6) as well as non-peptide, low molecular weight secretagogues (e.g. L-692,429, MK-0677, adenosine). The polypeptide is Growth hormone secretagogue receptor type 1 (Ghsr) (Mus musculus (Mouse)).